A 395-amino-acid chain; its full sequence is 1-deoxy-D-xylulose 5-phosphate reductoisomerase (395 aa).

NADPH is bound by residues Thr-13, Gly-14, Ser-15, Ile-16, Lys-40, and Asn-127. Lys-128 lines the 1-deoxy-D-xylulose 5-phosphate pocket. Residue Glu-129 coordinates NADPH. Asp-153 lines the Mn(2+) pocket. Residues Ser-154, Glu-155, Ser-184, and His-207 each coordinate 1-deoxy-D-xylulose 5-phosphate. Glu-155 serves as a coordination point for Mn(2+). Residue Gly-213 coordinates NADPH. 1-deoxy-D-xylulose 5-phosphate-binding residues include Ser-220, Asn-225, Lys-226, and Glu-229. Glu-229 is a binding site for Mn(2+).

It belongs to the DXR family. Mg(2+) is required as a cofactor. Requires Mn(2+) as cofactor.

It carries out the reaction 2-C-methyl-D-erythritol 4-phosphate + NADP(+) = 1-deoxy-D-xylulose 5-phosphate + NADPH + H(+). The protein operates within isoprenoid biosynthesis; isopentenyl diphosphate biosynthesis via DXP pathway; isopentenyl diphosphate from 1-deoxy-D-xylulose 5-phosphate: step 1/6. Catalyzes the NADPH-dependent rearrangement and reduction of 1-deoxy-D-xylulose-5-phosphate (DXP) to 2-C-methyl-D-erythritol 4-phosphate (MEP). This is 1-deoxy-D-xylulose 5-phosphate reductoisomerase from Nitrosospira multiformis (strain ATCC 25196 / NCIMB 11849 / C 71).